Consider the following 1184-residue polypeptide: PR domain zinc finger protein 10 (1184 aa).

The tract at residues 122–162 is disordered; sequence LDAKEEEEEEEDEDEDTEEEEEEDAEDTDVDDWQPDPPRPF. The span at 125 to 155 shows a compositional bias: acidic residues; it reads KEEEEEEEDEDEDTEEEEEEDAEDTDVDDWQ. The 119-residue stretch at 202–320 folds into the SET domain; sequence LPLVLYIDRF…PKQELKVWYA (119 aa). Residues 221–325 are N-terminal PR domain; essential for transcriptional activator activity; sequence IPKRTQFGPV…KVWYAASYAE (105 aa). The C2H2-type 1 zinc finger occupies 349–371; sequence WPCYECNRRFISSEQLQQHLNSH. Lysine 374 participates in a covalent cross-link: Glycyl lysine isopeptide (Lys-Gly) (interchain with G-Cter in SUMO2). Over residues 381 to 401 the composition is skewed to basic residues; that stretch reads TRGRGRGRGKRRFGPGRRPGR. The tract at residues 381 to 405 is disordered; that stretch reads TRGRGRGRGKRRFGPGRRPGRPPKF. Residue serine 418 is modified to Phosphoserine. Threonine 422 is subject to Phosphothreonine. A disordered region spans residues 444–487; the sequence is GLDQPEQASIPIPQLPQETPPSLEQEPETHTLHLQPQQEESLVP. Over residues 475-487 the composition is skewed to polar residues; the sequence is LHLQPQQEESLVP. 8 consecutive C2H2-type zinc fingers follow at residues 520-542, 550-572, 578-600, 606-629, 634-656, 662-685, 717-740, and 850-873; these read FKCL…LRFH, LTCD…MKLH, YSCI…VAIH, FTCP…RSFH, YQCT…MLRH, FLCS…QRMH, FKCR…SKRH, and VCCP…RKKH. The tract at residues 917 to 1164 is C-terminal glutamine-rich region; essential for transcriptional activator activity; it reads QAMTELSQTL…TGPSQQQTTQ (248 aa). Residues 1004–1054 are disordered; the sequence is EPAPAAPSASQVAGQPLSPSAQQVQQGLSPSHIQGSSSTQGQALQQQQNSS. Residues 1014–1036 are compositionally biased toward polar residues; the sequence is QVAGQPLSPSAQQVQQGLSPSHI. Residues 1037–1054 are compositionally biased toward low complexity; it reads QGSSSTQGQALQQQQNSS.

It belongs to the class V-like SAM-binding methyltransferase superfamily. As to expression, present in brain, liver, kidney, spleen and thymus (at protein level).

The protein localises to the nucleus. Its function is as follows. Transcriptional activator, essential for early embryonic development and survival of embryonic stem cells (ESCs). Supports cell growth and survival during early development by transcriptionally activating the expression of the translation initiation factor EIF3B, to sustain global translation. Activates the transcription of FLNC. The sequence is that of PR domain zinc finger protein 10 (Prdm10) from Mus musculus (Mouse).